Here is a 384-residue protein sequence, read N- to C-terminus: Calreticulin-3 (384 aa).

Positions 1–19 (MARALVQLWAICMLRVALA) are cleaved as a signal peptide. An N-domain region spans residues 20–197 (TVYFQEEFLD…GQSIESGSIE (178 aa)). An N-linked (GlcNAc...) asparagine glycan is attached at asparagine 42. The cysteines at positions 105 and 137 are disulfide-linked. An alpha-D-glucoside-binding residues include tyrosine 109, lysine 111, tyrosine 128, and aspartate 135. Tandem repeats lie at residues 191–202 (IESGSIEYDWNL), 208–219 (ETSPAESKDWEQ), 221–230 (KDNKAQDWEK), 234–245 (DASTSKQSDWNG), 249–259 (GDWPAPMLQKP), 263–271 (DGLKPEGIH), and 273–283 (DVWLHRKMKNT). A 4 X approximate repeats region spans residues 191–245 (IESGSIEYDWNLTSLKKETSPAESKDWEQTKDNKAQDWEKHFLDASTSKQSDWNG). Positions 198–294 (YDWNLTSLKK…YLTQYDLSEF (97 aa)) are P-domain. Residue asparagine 201 is glycosylated (N-linked (GlcNAc...) asparagine). Residues 249 to 283 (GDWPAPMLQKPPYQDGLKPEGIHKDVWLHRKMKNT) form a 3 X approximate repeats region. The segment at 295–384 (ENIGAIGLEL…FNQFHRRNEL (90 aa)) is C-domain. An an alpha-D-glucoside-binding site is contributed by glutamate 303. The Prevents secretion from ER signature appears at 381–384 (RNEL).

Belongs to the calreticulin family. In terms of assembly, component of an EIF2 complex at least composed of CELF1/CUGBP1, CALR, CALR3, EIF2S1, EIF2S2, HSP90B1 and HSPA5. Testis specific.

It is found in the endoplasmic reticulum lumen. In terms of biological role, during spermatogenesis, may act as a lectin-independent chaperone for specific client proteins such as ADAM3. Required for sperm fertility. CALR3 capacity for calcium-binding may be absent or much lower than that of CALR. The sequence is that of Calreticulin-3 (CALR3) from Homo sapiens (Human).